The following is a 231-amino-acid chain: Orotidine 5'-phosphate decarboxylase (231 aa).

Substrate-binding positions include aspartate 11, lysine 34, 61-70 (DLKLHDIPNT), threonine 117, arginine 179, glutamine 188, glycine 208, and arginine 209. Catalysis depends on lysine 63, which acts as the Proton donor.

Belongs to the OMP decarboxylase family. Type 1 subfamily. As to quaternary structure, homodimer.

It carries out the reaction orotidine 5'-phosphate + H(+) = UMP + CO2. Its pathway is pyrimidine metabolism; UMP biosynthesis via de novo pathway; UMP from orotate: step 2/2. Catalyzes the decarboxylation of orotidine 5'-monophosphate (OMP) to uridine 5'-monophosphate (UMP). In Streptococcus suis (strain 98HAH33), this protein is Orotidine 5'-phosphate decarboxylase.